We begin with the raw amino-acid sequence, 59 residues long: Insulin (59 aa).

Cystine bridges form between Cys7/Cys45, Cys19/Cys58, and Cys44/Cys49.

This sequence belongs to the insulin family. As to quaternary structure, heterodimer of a B chain and an A chain linked by two disulfide bonds.

Its subcellular location is the secreted. In terms of biological role, insulin decreases blood glucose concentration. It increases cell permeability to monosaccharides, amino acids and fatty acids. It accelerates glycolysis, the pentose phosphate cycle, and glycogen synthesis in liver. The sequence is that of Insulin (ins) from Chimaera monstrosa (Rabbit fish).